Consider the following 91-residue polypeptide: Elongation factor 1-beta (91 aa).

The protein belongs to the EF-1-beta/EF-1-delta family.

In terms of biological role, promotes the exchange of GDP for GTP in EF-1-alpha/GDP, thus allowing the regeneration of EF-1-alpha/GTP that could then be used to form the ternary complex EF-1-alpha/GTP/AAtRNA. The protein is Elongation factor 1-beta of Saccharolobus islandicus (strain Y.N.15.51 / Yellowstone #2) (Sulfolobus islandicus).